The sequence spans 766 residues: Cytoplasmic polyadenylation element-binding protein 3 (766 aa).

Disordered regions lie at residues 1–35 (MSQE…TSET), 131–179 (VPSR…ARRL), and 216–299 (PVPI…LPPR). Polar residues-rich tracts occupy residues 233–256 (ETPT…SDYQ) and 276–289 (STPN…NRDN). One can recognise an RRM domain in the interval 310–332 (IFVGGVPWDITEAALKDSFGEFG). A disordered region spans residues 578–602 (KAFSGPNRRSHLSSNSPSKPASLMS). Residues 589–602 (LSSNSPSKPASLMS) are compositionally biased toward low complexity.

Its function is as follows. Cytoplasmic polyadenylation element binding protein that binds to and regulates the translation of specific mRNAs. In Caenorhabditis remanei (Caenorhabditis vulgaris), this protein is Cytoplasmic polyadenylation element-binding protein 3 (cpb-3).